The primary structure comprises 338 residues: Cilia- and flagella-associated protein 36 (338 aa).

Positions 142 to 179 (ISDLEQEEMKLVSEALRLSKEEYEREQLRRSAKELNCT) form a coiled coil. 2 disordered regions span residues 175–220 (ELNC…ESPY) and 281–314 (KKQESKKMAHNSEVHEEKATCSKQEMTEEEKKSL). Residues 187–202 (KQSNGSERTPSNTELP) are compositionally biased toward polar residues. A coiled-coil region spans residues 255-330 (NLSQAEKEQL…AEKLKEEVIL (76 aa)).

The protein belongs to the CFAP36 family.

The protein resides in the nucleus. It is found in the cytoplasm. Its subcellular location is the cell projection. It localises to the cilium. The protein localises to the flagellum. The sequence is that of Cilia- and flagella-associated protein 36 from Xenopus laevis (African clawed frog).